An 86-amino-acid chain; its full sequence is Large ribosomal subunit protein uL23 (86 aa).

It belongs to the universal ribosomal protein uL23 family. In terms of assembly, part of the 50S ribosomal subunit. Contacts protein L29.

Binds to 23S rRNA. One of the proteins that surrounds the polypeptide exit tunnel on the outside of the ribosome. This Thermococcus gammatolerans (strain DSM 15229 / JCM 11827 / EJ3) protein is Large ribosomal subunit protein uL23.